Reading from the N-terminus, the 86-residue chain is Synergistic-like venom protein (86 aa).

An N-terminal signal peptide occupies residues 1–21 (MKTLLLTLVVVTIVCLDLGYT). Intrachain disulfides connect Cys-24-Cys-45, Cys-38-Cys-63, Cys-67-Cys-78, and Cys-79-Cys-84.

The protein belongs to the three-finger toxin family. Short-chain subfamily. Aminergic toxin sub-subfamily. Expressed by the venom gland.

It localises to the secreted. This is Synergistic-like venom protein from Dendroaspis angusticeps (Eastern green mamba).